The primary structure comprises 549 residues: Cytoplasmic trehalase (549 aa).

Residues R168, W175 to D176, N212, R221 to Q223, R292 to E294, and G324 contribute to the substrate site. Residues D326 and E509 each act as proton donor/acceptor in the active site. A substrate-binding site is contributed by E525.

Belongs to the glycosyl hydrolase 37 family. Monomer.

The protein localises to the cytoplasm. It carries out the reaction alpha,alpha-trehalose + H2O = alpha-D-glucose + beta-D-glucose. The protein operates within glycan degradation; trehalose degradation; D-glucose from alpha,alpha-trehalose: step 1/1. Functionally, hydrolyzes trehalose to glucose. Could be involved, in cells returning to low osmolarity conditions, in the utilization of the accumulated cytoplasmic trehalose, which was synthesized in response to high osmolarity. In Escherichia coli O81 (strain ED1a), this protein is Cytoplasmic trehalase.